A 206-amino-acid polypeptide reads, in one-letter code: MAEYLVPKSAVVFEEEIKKSRFITYLQHTEGLEDARAFWAKIKQEHPNARHHCWAAVAGKPTDSLQLGFSDDGEPAGTAGKPMLSALQGSQLGEISAVVVRYYGGILLGTGGLVRAYGNGVQQALKLIESEIKVERTLFKLDCDYGQLRLVQQLCEKYQVEILSQGFQANIHLILGISEKTIEAFSSELTEKSSGRLVIQLLEIGE.

It belongs to the IMPACT family.

The polypeptide is IMPACT family member HI_0722 (Haemophilus influenzae (strain ATCC 51907 / DSM 11121 / KW20 / Rd)).